Here is a 139-residue protein sequence, read N- to C-terminus: Ribosomal RNA large subunit methyltransferase H (139 aa).

Residues Leu57, Gly88, and 107–112 (LSAMTF) contribute to the S-adenosyl-L-methionine site.

This sequence belongs to the RNA methyltransferase RlmH family. In terms of assembly, homodimer.

The protein localises to the cytoplasm. The enzyme catalyses pseudouridine(1915) in 23S rRNA + S-adenosyl-L-methionine = N(3)-methylpseudouridine(1915) in 23S rRNA + S-adenosyl-L-homocysteine + H(+). In terms of biological role, specifically methylates the pseudouridine at position 1915 (m3Psi1915) in 23S rRNA. This is Ribosomal RNA large subunit methyltransferase H from Solibacter usitatus (strain Ellin6076).